The primary structure comprises 136 residues: Putative pre-16S rRNA nuclease (136 aa).

The protein belongs to the YqgF nuclease family.

It localises to the cytoplasm. Functionally, could be a nuclease involved in processing of the 5'-end of pre-16S rRNA. The polypeptide is Putative pre-16S rRNA nuclease (Francisella tularensis subsp. mediasiatica (strain FSC147)).